The following is a 192-amino-acid chain: Probable cobalt-precorrin-6B C(15)-methyltransferase (decarboxylating) (192 aa).

S-adenosyl-L-methionine is bound by residues T17, 41-45 (GCGTG), D62, and A91.

The protein belongs to the methyltransferase superfamily. Archaeal-type CbiT family. As to quaternary structure, homotetramer.

It carries out the reaction Co-precorrin-6B + S-adenosyl-L-methionine = Co-precorrin-7 + S-adenosyl-L-homocysteine + CO2. The protein operates within cofactor biosynthesis; adenosylcobalamin biosynthesis; cob(II)yrinate a,c-diamide from sirohydrochlorin (anaerobic route): step 8/10. Its function is as follows. Catalyzes the methylation of C-15 in cobalt-precorrin-6B followed by the decarboxylation of C-12 to form cobalt-precorrin-7. This is Probable cobalt-precorrin-6B C(15)-methyltransferase (decarboxylating) from Methanothermobacter thermautotrophicus (strain ATCC 29096 / DSM 1053 / JCM 10044 / NBRC 100330 / Delta H) (Methanobacterium thermoautotrophicum).